The chain runs to 226 residues: 2-C-methyl-D-erythritol 4-phosphate cytidylyltransferase (226 aa).

The protein belongs to the IspD/TarI cytidylyltransferase family. IspD subfamily.

The catalysed reaction is 2-C-methyl-D-erythritol 4-phosphate + CTP + H(+) = 4-CDP-2-C-methyl-D-erythritol + diphosphate. It functions in the pathway isoprenoid biosynthesis; isopentenyl diphosphate biosynthesis via DXP pathway; isopentenyl diphosphate from 1-deoxy-D-xylulose 5-phosphate: step 2/6. Its function is as follows. Catalyzes the formation of 4-diphosphocytidyl-2-C-methyl-D-erythritol from CTP and 2-C-methyl-D-erythritol 4-phosphate (MEP). This Bacillus cereus (strain ATCC 14579 / DSM 31 / CCUG 7414 / JCM 2152 / NBRC 15305 / NCIMB 9373 / NCTC 2599 / NRRL B-3711) protein is 2-C-methyl-D-erythritol 4-phosphate cytidylyltransferase.